We begin with the raw amino-acid sequence, 106 residues long: GSAPPGDPVEGKHLFHTICILCHTDIKGRNKVGPSLYGVVGRHSGIEPGYNYSEANIKSGIVWTPDVLFKYIEHPQKIVPGTKMGYPGQPDPQKRADIIAYLETLK.

Residues cysteine 19, cysteine 22, histidine 23, and methionine 84 each coordinate heme c.

Belongs to the cytochrome c family. Binds 1 heme c group covalently per subunit.

In Rhodopila globiformis (Rhodopseudomonas globiformis), this protein is Cytochrome c2.